The sequence spans 107 residues: Nucleoid-associated protein NE0434 (107 aa).

It belongs to the YbaB/EbfC family. Homodimer.

The protein localises to the cytoplasm. It is found in the nucleoid. In terms of biological role, binds to DNA and alters its conformation. May be involved in regulation of gene expression, nucleoid organization and DNA protection. The polypeptide is Nucleoid-associated protein NE0434 (Nitrosomonas europaea (strain ATCC 19718 / CIP 103999 / KCTC 2705 / NBRC 14298)).